Reading from the N-terminus, the 318-residue chain is MEQQNPIPIITSITVTNISSVAAPHCTHLCQKTRINKYIDRHPAIARANGTPRLSAKKSPSSNIVPNSPAATRFSVTRAAAIRTRNVTERVIIIAPVTNVFRFRIAWTRFRSLTSNGVMLIINQESVLYNIRDIFRACTIDEEWNYLIRGNIIYSPLLDWDISTENEQHSSVLLLATPAREKSFVRLLEKASDHNPEIRNRLGRLRAFTESCVSQPIFNIFTLFNAMIPLESCKKLVLFLRQLQILQRYFVIKKSTVGFESVSLEPDAAGVPLPPEFIDAAVAVQIPPHKTTPWFFGVVPIGMCRWKEGVSKREVVSF.

This is an uncharacterized protein from Ictaluridae (bullhead catfishes).